Consider the following 778-residue polypeptide: Subtilisin-like protease SBT5.4 (778 aa).

The N-terminal stretch at 1–35 is a signal peptide; the sequence is MSMTRRYSSTQYSNKMSLQSLSSLLLLVTLFFSPA. The region spanning 41–126 is the Inhibitor I9 domain; that stretch reads SYIVYLGSHA…VFPNKGRKLH (86 aa). The region spanning 130-634 is the Peptidase S8 domain; sequence SWNFMLLAKN…SGHVQPNKAA (505 aa). The active-site Charge relay system is the D163. A glycan (N-linked (GlcNAc...) asparagine) is linked at N218. Residue H230 is the Charge relay system of the active site. N253 and N404 each carry an N-linked (GlcNAc...) asparagine glycan. In terms of domain architecture, PA spans 401–486; it reads ANGNVTDALL…KDGETLFSYL (86 aa). S567 acts as the Charge relay system in catalysis. N-linked (GlcNAc...) asparagine glycans are attached at residues N657, N690, and N732.

It belongs to the peptidase S8 family. As to expression, expressed in the vasculature of roots and leaves, stomata, sepals, stigma, anthers and siliques.

The protein resides in the endoplasmic reticulum. It localises to the cell membrane. Serine protease. Has a substrate preference for the hydrophobic residues Phe and Ala and the basic residue Asp in the P1 position, and for Asp, Leu or Ala in the P1' position. Interferes with CLAVATA 3 (CLV3) signaling, but does not cleave CLV3. The polypeptide is Subtilisin-like protease SBT5.4 (Arabidopsis thaliana (Mouse-ear cress)).